Reading from the N-terminus, the 284-residue chain is D-tagatose-1,6-bisphosphate aldolase subunit GatY (284 aa).

The active-site Proton donor is the Asp-82. The Zn(2+) site is built by His-83 and His-180. Gly-181 contributes to the dihydroxyacetone phosphate binding site. His-208 lines the Zn(2+) pocket. Residues Gly-209 to Ser-211 and Asn-230 to Thr-233 each bind dihydroxyacetone phosphate.

It belongs to the class II fructose-bisphosphate aldolase family. TagBP aldolase GatY subfamily. In terms of assembly, forms a complex with GatZ. It depends on Zn(2+) as a cofactor.

It catalyses the reaction D-tagatofuranose 1,6-bisphosphate = D-glyceraldehyde 3-phosphate + dihydroxyacetone phosphate. It participates in carbohydrate metabolism; D-tagatose 6-phosphate degradation; D-glyceraldehyde 3-phosphate and glycerone phosphate from D-tagatose 6-phosphate: step 2/2. In terms of biological role, catalytic subunit of the tagatose-1,6-bisphosphate aldolase GatYZ, which catalyzes the reversible aldol condensation of dihydroxyacetone phosphate (DHAP or glycerone-phosphate) with glyceraldehyde 3-phosphate (G3P) to produce tagatose 1,6-bisphosphate (TBP). Requires GatZ subunit for full activity and stability. Is involved in the catabolism of galactitol. The chain is D-tagatose-1,6-bisphosphate aldolase subunit GatY from Salmonella choleraesuis (strain SC-B67).